The sequence spans 445 residues: MFTLTKALEKALLQHFIYMKVNIAYAINKPFPFFEALRDNSFITERMYKESLEACQNLVPLSKVVHNILTSLEQTFHPSVLLTLFSKVNLREYPSLVAIFRSFRNVGYTYEEKNRPPLTLLEDLANPAEGCSLQTLLPPPRPQISLPSHLSSAPRVCDPRATAQPIIEILDEQPSPSPRAVPLLGCIQEGKTTPVSSRDHQRKDKEDSREMPHSPSGPESVVKDDSPAANDLEMAREVPCTPANKKARRKKRPNWSNSKRRRQKKKPRQDEMMGVASPGHGVQEKLKAVSRRTLWKDDSSTNVKEVTKTQRTRMRRAQTSNSQEISKEASKTSGRKRPSTARRTTQVPEKTKNDAVDFSPTLPVTCGKAKGTLFQEKLKQGASKKCIQNEAGDWLTVKEFLNEGGRATSKDWKGVIRCNGETLRHLEQKGLLFFTSKSKPQKKGA.

The 108-residue stretch at 1 to 108 (MFTLTKALEK…IFRSFRNVGY (108 aa)) folds into the HSR domain. Residues Ser-175 and Ser-177 each carry the phosphoserine modification. The disordered stretch occupies residues 187–356 (IQEGKTTPVS…VPEKTKNDAV (170 aa)). Residues 197–212 (SRDHQRKDKEDSREMP) are compositionally biased toward basic and acidic residues. Ser-226 is subject to Phosphoserine. The segment covering 245–267 (KKARRKKRPNWSNSKRRRQKKKP) has biased composition (basic residues). The short motif at 251–266 (KRPNWSNSKRRRQKKK) is the Nuclear localization signal element. Phosphoserine is present on Ser-277. The region spanning 353 to 433 (NDAVDFSPTL…RHLEQKGLLF (81 aa)) is the SAND domain.

Detected in lung and macrophages.

The protein localises to the nucleus. Its function is as follows. May act as a transcription factor. Plays a role in the innate immunity against intracellular pathogens. Required for resistance to M.tuberculosis and L.monocytogenes. Promotes apoptosis of infected cells. The protein is Sp110 nuclear body protein (Sp110) of Mus musculus (Mouse).